A 388-amino-acid polypeptide reads, in one-letter code: Acyl-CoA dehydrogenase fadE12 (388 aa).

Belongs to the acyl-CoA dehydrogenase family. FAD serves as cofactor.

It catalyses the reaction a 2,3-saturated acyl-CoA + A = a 2,3-dehydroacyl-CoA + AH2. The protein is Acyl-CoA dehydrogenase fadE12 (fadE12) of Mycobacterium bovis (strain ATCC BAA-935 / AF2122/97).